A 442-amino-acid chain; its full sequence is F-box/FBD/LRR-repeat protein At2g26030 (442 aa).

The 47-residue stretch at 3 to 49 (CDRICELPDSLLTQVLSYLPTIDSVKTSVLSKRWEFLWLRVPVLDLK) folds into the F-box domain. 6 LRR repeats span residues 128–160 (CNTLVSLMLVTVGIENPEFVVSLPSLKIMHLED), 162–187 (WYYDDPLIMEKIISGCPVLEDFVLIR), 188–214 (PIDFCNLDVLQFLRVRSLSLRSFRLTF), 234–260 (YLNFNDDQSDTIVVKNMTSLSMIDIDS), 278–309 (KRDIIRDFLTAISCVRHMIISRRTLEVLDRYS), and 324–352 (QAAVSRSMLQLLLVFLESCPNLENLILDF). Residues 358–410 (PEQDGLTYVPQCLLSSLECVEIRELIMGEETGEKLVRYFLKNSVVLKKLILRL) form the FBD domain.

This is F-box/FBD/LRR-repeat protein At2g26030 from Arabidopsis thaliana (Mouse-ear cress).